The sequence spans 453 residues: tRNA-2-methylthio-N(6)-dimethylallyladenosine synthase (453 aa).

An MTTase N-terminal domain is found at 17 to 135 (GTFFIETWGC…FPEYLNRAKQ (119 aa)). Positions 26, 62, 96, 172, 176, and 179 each coordinate [4Fe-4S] cluster. The region spanning 158–388 (RKSSTKAFVT…VEVVNKSCEK (231 aa)) is the Radical SAM core domain. In terms of domain architecture, TRAM spans 391 to 453 (KKYQDRIVKV…LSFSLEGEEV (63 aa)).

It belongs to the methylthiotransferase family. MiaB subfamily. Monomer. Requires [4Fe-4S] cluster as cofactor.

The protein localises to the cytoplasm. The enzyme catalyses N(6)-dimethylallyladenosine(37) in tRNA + (sulfur carrier)-SH + AH2 + 2 S-adenosyl-L-methionine = 2-methylsulfanyl-N(6)-dimethylallyladenosine(37) in tRNA + (sulfur carrier)-H + 5'-deoxyadenosine + L-methionine + A + S-adenosyl-L-homocysteine + 2 H(+). Its function is as follows. Catalyzes the methylthiolation of N6-(dimethylallyl)adenosine (i(6)A), leading to the formation of 2-methylthio-N6-(dimethylallyl)adenosine (ms(2)i(6)A) at position 37 in tRNAs that read codons beginning with uridine. The protein is tRNA-2-methylthio-N(6)-dimethylallyladenosine synthase of Clostridium tetani (strain Massachusetts / E88).